Consider the following 332-residue polypeptide: 2,3-diketo-L-gulonate reductase (332 aa).

H44 functions as the Proton donor in the catalytic mechanism. NAD(+) contacts are provided by residues 168–174 (ITMVDMS), 224–225 (WK), and 304–306 (GHE).

It belongs to the LDH2/MDH2 oxidoreductase family. DlgD subfamily. In terms of assembly, homodimer.

The protein localises to the cytoplasm. It catalyses the reaction 3-dehydro-L-gulonate + NAD(+) = 2,3-dioxo-L-gulonate + NADH + H(+). The enzyme catalyses 3-dehydro-L-gulonate + NADP(+) = 2,3-dioxo-L-gulonate + NADPH + H(+). Functionally, catalyzes the reduction of 2,3-diketo-L-gulonate in the presence of NADH, to form 3-keto-L-gulonate. This Salmonella agona (strain SL483) protein is 2,3-diketo-L-gulonate reductase.